Here is a 103-residue protein sequence, read N- to C-terminus: Probable protease inhibitor Egf0.4a (103 aa).

The N-terminal stretch at 1 to 22 (MMSEKFALVLLVACIAFIGIET) is a signal peptide. In terms of domain architecture, TIL spans 35–87 (CGENEAYDSMRRGCEKRCDDHNPTFCFKFTTVCWCEKGYVRDKSDTCIKVEDC).

Belongs to the polydnaviridae EGF-like motif protein family.

The polypeptide is Probable protease inhibitor Egf0.4a (O4) (Microplitis demolitor (Parasitoid wasp)).